Reading from the N-terminus, the 657-residue chain is Protein kinase and PP2C-like domain-containing protein (657 aa).

The Protein kinase domain maps to 32–327; it reads FSLLSPIAKG…LKIIEKHIAV (296 aa). Residues 38–46 and Lys-59 contribute to the ATP site; that span reads IAKGSESTV. The active-site Proton acceptor; for kinase activity is Asp-156. The PPM-type phosphatase domain maps to 390-647; sequence SWGSFATCGR…DNITVIVVFL (258 aa). The Mn(2+) site is built by Asp-426, Gly-427, Asp-598, and Asp-638.

The protein in the N-terminal section; belongs to the protein kinase superfamily. Ser/Thr protein kinase family. In the C-terminal section; belongs to the PP2C family. Requires Mg(2+) as cofactor. Mn(2+) is required as a cofactor.

The catalysed reaction is L-seryl-[protein] + ATP = O-phospho-L-seryl-[protein] + ADP + H(+). It carries out the reaction L-threonyl-[protein] + ATP = O-phospho-L-threonyl-[protein] + ADP + H(+). It catalyses the reaction O-phospho-L-seryl-[protein] + H2O = L-seryl-[protein] + phosphate. The enzyme catalyses O-phospho-L-threonyl-[protein] + H2O = L-threonyl-[protein] + phosphate. The protein is Protein kinase and PP2C-like domain-containing protein of Oryza sativa subsp. japonica (Rice).